The primary structure comprises 423 residues: Heat shock transcription factor, X-linked (423 aa).

Positions 1–25 (MEDKRSLSMARCEERNSRGQDHGLE) are enriched in basic and acidic residues. 3 disordered regions span residues 1–56 (MEDK…STGS), 215–303 (KSAP…EGSQ), and 397–423 (PHSH…DQST). A DNA-binding region spans residues 98 to 282 (PFPQKLWRLV…PATPVMVPDS (185 aa)). A Glycyl lysine isopeptide (Lys-Gly) (interchain with G-Cter in SUMO1) cross-link involves residue K215. Polar residues predominate over residues 243–254 (HTSPNENDQVTP).

Belongs to the HSF family. Testis-specific.

It localises to the nucleus. The protein resides in the cytoplasm. The polypeptide is Heat shock transcription factor, X-linked (HSFX1) (Homo sapiens (Human)).